A 78-amino-acid polypeptide reads, in one-letter code: Sec-independent protein translocase protein TatA (78 aa).

A helical transmembrane segment spans residues 1 to 21 (MGSLSIWHWIVVIAVVLLLFG). Over residues 43-60 (LQDDEKTAEKSEPVKSID) the composition is skewed to basic and acidic residues. The interval 43 to 78 (LQDDEKTAEKSEPVKSIDHTSTPGATNRTDVGSKAV) is disordered. The span at 61-72 (HTSTPGATNRTD) shows a compositional bias: polar residues.

It belongs to the TatA/E family. As to quaternary structure, the Tat system comprises two distinct complexes: a TatABC complex, containing multiple copies of TatA, TatB and TatC subunits, and a separate TatA complex, containing only TatA subunits. Substrates initially bind to the TatABC complex, which probably triggers association of the separate TatA complex to form the active translocon.

It is found in the cell inner membrane. Its function is as follows. Part of the twin-arginine translocation (Tat) system that transports large folded proteins containing a characteristic twin-arginine motif in their signal peptide across membranes. TatA could form the protein-conducting channel of the Tat system. In Rhodopseudomonas palustris (strain ATCC BAA-98 / CGA009), this protein is Sec-independent protein translocase protein TatA.